The following is a 367-amino-acid chain: Ferrochelatase (367 aa).

Fe cation contacts are provided by His-226 and Glu-307.

It belongs to the ferrochelatase family.

It is found in the cytoplasm. It carries out the reaction heme b + 2 H(+) = protoporphyrin IX + Fe(2+). The protein operates within porphyrin-containing compound metabolism; protoheme biosynthesis; protoheme from protoporphyrin-IX: step 1/1. Catalyzes the ferrous insertion into protoporphyrin IX. This is Ferrochelatase from Burkholderia mallei (strain NCTC 10247).